Here is a 410-residue protein sequence, read N- to C-terminus: Cysteine desulfurase IscS (410 aa).

Pyridoxal 5'-phosphate-binding positions include 80 to 81 (AT), asparagine 160, glutamine 188, and 208 to 210 (SGH). N6-(pyridoxal phosphate)lysine is present on lysine 211. Threonine 248 lines the pyridoxal 5'-phosphate pocket. Catalysis depends on cysteine 334, which acts as the Cysteine persulfide intermediate. Cysteine 334 provides a ligand contact to [2Fe-2S] cluster.

Belongs to the class-V pyridoxal-phosphate-dependent aminotransferase family. NifS/IscS subfamily. Homodimer. Forms a heterotetramer with IscU, interacts with other sulfur acceptors. It depends on pyridoxal 5'-phosphate as a cofactor.

It is found in the cytoplasm. It catalyses the reaction (sulfur carrier)-H + L-cysteine = (sulfur carrier)-SH + L-alanine. It functions in the pathway cofactor biosynthesis; iron-sulfur cluster biosynthesis. Its function is as follows. Master enzyme that delivers sulfur to a number of partners involved in Fe-S cluster assembly, tRNA modification or cofactor biosynthesis. Catalyzes the removal of elemental sulfur atoms from cysteine to produce alanine. Functions as a sulfur delivery protein for Fe-S cluster synthesis onto IscU, an Fe-S scaffold assembly protein, as well as other S acceptor proteins. The polypeptide is Cysteine desulfurase IscS (Rickettsia felis (strain ATCC VR-1525 / URRWXCal2) (Rickettsia azadi)).